The following is a 153-amino-acid chain: Alpha-amylase inhibitor 0.28 (153 aa).

The signal sequence occupies residues 1-30 (MWMKTVFWGLLVFMLVATTMAVEYGARSHN). Disulfide bonds link cysteine 37–cysteine 84, cysteine 51–cysteine 72, cysteine 59–cysteine 112, cysteine 73–cysteine 128, and cysteine 86–cysteine 143.

Belongs to the protease inhibitor I6 (cereal trypsin/alpha-amylase inhibitor) family. As to quaternary structure, monomer. The disulfide bonds are essential for the inhibitor activity. As to expression, endosperm.

The protein resides in the secreted. Functionally, alpha-amylase inhibitor. The sequence is that of Alpha-amylase inhibitor 0.28 (IMA1) from Triticum aestivum (Wheat).